We begin with the raw amino-acid sequence, 287 residues long: Large ribosomal subunit protein uL2 (287 aa).

Residues 222–266 form a disordered region; it reads RGIRPTVRGSAMNPNDHPHGGGEGRSPVGRDAPRTPWGKRHMGVK.

This sequence belongs to the universal ribosomal protein uL2 family. Part of the 50S ribosomal subunit. Forms a bridge to the 30S subunit in the 70S ribosome.

Its function is as follows. One of the primary rRNA binding proteins. Required for association of the 30S and 50S subunits to form the 70S ribosome, for tRNA binding and peptide bond formation. It has been suggested to have peptidyltransferase activity; this is somewhat controversial. Makes several contacts with the 16S rRNA in the 70S ribosome. The sequence is that of Large ribosomal subunit protein uL2 from Mycoplasma pneumoniae (strain ATCC 29342 / M129 / Subtype 1) (Mycoplasmoides pneumoniae).